The sequence spans 298 residues: MTEQAISFAKDFLAGGIAAAISKTAVAPIERVKLLLQVQHASKQIAADKQYKGIVDCIVRIPKEQGVLSFWRGNLANVIRYFPTQALNFAFKDKYKQIFLGGVDKHTQFWRYFAGNLASGGAAGATSLCFVYPLDFARTRLAADVGKSATEREFKGLGDCLVKITKSDGIRGLYQGFNVSVQGIIIYRAAYFGVYGTAKGMLPDPRNTHIVVSWMIAQTVTAVAGVFSYPFDTVRRRMMMQSGRKGADIMYKGTLDCWRKIFKDEGGKAFFKGAWSNVLRGMGGAFVLVLYDELKKVI.

At Met-1 the chain carries N-acetylmethionine. Residues Met-1–Ser-7 are Mitochondrial intermembrane-facing. Position 2 is an N-acetylthreonine; in ADP/ATP translocase 3, N-terminally processed (Thr-2). A Solcar 1 repeat occupies Ile-6–Ile-98. A helical transmembrane segment spans residues Phe-8–Gln-37. Residues Val-38–Asn-74 lie on the Mitochondrial matrix side of the membrane. Lys-52 is subject to N6,N6,N6-trimethyllysine. The helical transmembrane segment at Leu-75 to Phe-99 threads the bilayer. Residues Arg-80 and Lys-92 each contribute to the ADP site. The Mitochondrial intermembrane segment spans residues Leu-100–Phe-109. Lys-105 bears the N6-acetyllysine mark. A helical membrane pass occupies residues Trp-110–Phe-130. Solcar repeat units follow at residues Arg-111–Met-201 and Val-212–Val-297. Residues Val-131 to Asn-178 lie on the Mitochondrial matrix side of the membrane. Residues Val-179 to Lys-199 traverse the membrane as a helical segment. Residues Gly-200 to Ile-210 lie on the Mitochondrial intermembrane side of the membrane. The chain crosses the membrane as a helical span at residues Val-211 to Phe-231. The Mitochondrial matrix portion of the chain corresponds to Asp-232–Gly-273. An ADP-binding site is contributed by Arg-235. Residues Arg-235–Met-240 are important for transport activity. The Nucleotide carrier signature motif motif lies at Arg-235–Met-240. Lys-268 carries the post-translational modification N6-acetyllysine. Residues Ala-274–Tyr-291 traverse the membrane as a helical segment. At Asp-292–Ile-298 the chain is on the mitochondrial intermembrane side.

The protein belongs to the mitochondrial carrier (TC 2.A.29) family. In terms of assembly, monomer. Found in a complex with ARL2, ARL2BP and SLC25A6/ANT3. Trimethylated by ANTKMT at Lys-52.

It localises to the mitochondrion inner membrane. The protein resides in the membrane. It catalyses the reaction ADP(in) + ATP(out) = ADP(out) + ATP(in). The catalysed reaction is H(+)(in) = H(+)(out). The matrix-open state (m-state) is inhibited by the membrane-permeable bongkrekic acid (BKA). The cytoplasmic-open state (c-state) is inhibited by the membrane-impermeable toxic inhibitor carboxyatractyloside (CATR). Proton transporter activity is inhibited by ADP:ATP antiporter activity. ADP:ATP antiporter that mediates import of ADP into the mitochondrial matrix for ATP synthesis, and export of ATP out to fuel the cell. Cycles between the cytoplasmic-open state (c-state) and the matrix-open state (m-state): operates by the alternating access mechanism with a single substrate-binding site intermittently exposed to either the cytosolic (c-state) or matrix (m-state) side of the inner mitochondrial membrane. In addition to its ADP:ATP antiporter activity, also involved in mitochondrial uncoupling and mitochondrial permeability transition pore (mPTP) activity. Plays a role in mitochondrial uncoupling by acting as a proton transporter: proton transport uncouples the proton flows via the electron transport chain and ATP synthase to reduce the efficiency of ATP production and cause mitochondrial thermogenesis. Proton transporter activity is inhibited by ADP:ATP antiporter activity, suggesting that SLC25A6/ANT3 acts as a master regulator of mitochondrial energy output by maintaining a delicate balance between ATP production (ADP:ATP antiporter activity) and thermogenesis (proton transporter activity). Proton transporter activity requires free fatty acids as cofactor, but does not transport it. Also plays a key role in mPTP opening, a non-specific pore that enables free passage of the mitochondrial membranes to solutes of up to 1.5 kDa, and which contributes to cell death. It is however unclear if SLC25A6/ANT3 constitutes a pore-forming component of mPTP or regulates it. In Sus scrofa (Pig), this protein is ADP/ATP translocase 3.